The primary structure comprises 417 residues: Serine hydroxymethyltransferase 1 (417 aa).

Residues leucine 121 and 125-127 (GHL) contribute to the (6S)-5,6,7,8-tetrahydrofolate site. At lysine 230 the chain carries N6-(pyridoxal phosphate)lysine. Residue 355-357 (SPF) coordinates (6S)-5,6,7,8-tetrahydrofolate.

This sequence belongs to the SHMT family. Homodimer. It depends on pyridoxal 5'-phosphate as a cofactor.

Its subcellular location is the cytoplasm. It carries out the reaction (6R)-5,10-methylene-5,6,7,8-tetrahydrofolate + glycine + H2O = (6S)-5,6,7,8-tetrahydrofolate + L-serine. It participates in one-carbon metabolism; tetrahydrofolate interconversion. It functions in the pathway amino-acid biosynthesis; glycine biosynthesis; glycine from L-serine: step 1/1. Catalyzes the reversible interconversion of serine and glycine with tetrahydrofolate (THF) serving as the one-carbon carrier. This reaction serves as the major source of one-carbon groups required for the biosynthesis of purines, thymidylate, methionine, and other important biomolecules. Also exhibits THF-independent aldolase activity toward beta-hydroxyamino acids, producing glycine and aldehydes, via a retro-aldol mechanism. The sequence is that of Serine hydroxymethyltransferase 1 from Pseudomonas syringae pv. tomato (strain ATCC BAA-871 / DC3000).